Reading from the N-terminus, the 78-residue chain is MARVCQVTGKGPMVGNNVSHANNKTKRRFLPNLQSRRFWVESENRWVRLRVTAKAIRTIDKNGIDAVLADLRARGEAV.

Belongs to the bacterial ribosomal protein bL28 family.

This is Large ribosomal subunit protein bL28 from Bordetella avium (strain 197N).